The chain runs to 360 residues: NAD(P)H-quinone oxidoreductase subunit 1, chloroplastic (360 aa).

The next 9 membrane-spanning stretches (helical) occupy residues 27-47 (IWIFVPIFSLVLGIITGVLVI), 98-118 (FSIGPSIAVISILLSYSVIPF), 129-149 (IGIFLWIAISSIAPIGLLMSG), 165-185 (AAQSISYEIPLTLCVLSISLL), 203-223 (FWGWNLWRQPIGFIIFLISSL), 248-268 (YSGIKFGLFYVASYLNLLISS), 269-289 (LFVTVLYLGGWNISIPYISIL), 297-317 (IFGTTICIFITLAKTYLFLFI), and 340-360 (FLLPISLGNLLLTTSFQLFSL).

It belongs to the complex I subunit 1 family. NDH is composed of at least 16 different subunits, 5 of which are encoded in the nucleus.

It is found in the plastid. It localises to the chloroplast thylakoid membrane. It catalyses the reaction a plastoquinone + NADH + (n+1) H(+)(in) = a plastoquinol + NAD(+) + n H(+)(out). The enzyme catalyses a plastoquinone + NADPH + (n+1) H(+)(in) = a plastoquinol + NADP(+) + n H(+)(out). Its function is as follows. NDH shuttles electrons from NAD(P)H:plastoquinone, via FMN and iron-sulfur (Fe-S) centers, to quinones in the photosynthetic chain and possibly in a chloroplast respiratory chain. The immediate electron acceptor for the enzyme in this species is believed to be plastoquinone. Couples the redox reaction to proton translocation, and thus conserves the redox energy in a proton gradient. The protein is NAD(P)H-quinone oxidoreductase subunit 1, chloroplastic of Olimarabidopsis pumila (Dwarf rocket).